We begin with the raw amino-acid sequence, 234 residues long: 1-(5-phosphoribosyl)-5-[(5-phosphoribosylamino)methylideneamino] imidazole-4-carboxamide isomerase (234 aa).

Asp-9 functions as the Proton acceptor in the catalytic mechanism. Asp-131 acts as the Proton donor in catalysis.

The protein belongs to the HisA/HisF family.

The protein resides in the cytoplasm. It catalyses the reaction 1-(5-phospho-beta-D-ribosyl)-5-[(5-phospho-beta-D-ribosylamino)methylideneamino]imidazole-4-carboxamide = 5-[(5-phospho-1-deoxy-D-ribulos-1-ylimino)methylamino]-1-(5-phospho-beta-D-ribosyl)imidazole-4-carboxamide. Its pathway is amino-acid biosynthesis; L-histidine biosynthesis; L-histidine from 5-phospho-alpha-D-ribose 1-diphosphate: step 4/9. The chain is 1-(5-phosphoribosyl)-5-[(5-phosphoribosylamino)methylideneamino] imidazole-4-carboxamide isomerase from Staphylococcus carnosus (strain TM300).